The chain runs to 371 residues: Queuine tRNA-ribosyltransferase (371 aa).

Catalysis depends on Asp-90, which acts as the Proton acceptor. Substrate-binding positions include 90-94, Asp-144, Gln-188, and Gly-215; that span reads DSGGF. Residues 246 to 252 are RNA binding; that stretch reads GVGTPED. Residue Asp-265 is the Nucleophile of the active site. An RNA binding; important for wobble base 34 recognition region spans residues 270 to 274; the sequence is TRNAR. Zn(2+)-binding residues include Cys-303, Cys-305, Cys-308, and His-334.

This sequence belongs to the queuine tRNA-ribosyltransferase family. Homodimer. Within each dimer, one monomer is responsible for RNA recognition and catalysis, while the other monomer binds to the replacement base PreQ1. It depends on Zn(2+) as a cofactor.

It catalyses the reaction 7-aminomethyl-7-carbaguanine + guanosine(34) in tRNA = 7-aminomethyl-7-carbaguanosine(34) in tRNA + guanine. It functions in the pathway tRNA modification; tRNA-queuosine biosynthesis. Its function is as follows. Catalyzes the base-exchange of a guanine (G) residue with the queuine precursor 7-aminomethyl-7-deazaguanine (PreQ1) at position 34 (anticodon wobble position) in tRNAs with GU(N) anticodons (tRNA-Asp, -Asn, -His and -Tyr). Catalysis occurs through a double-displacement mechanism. The nucleophile active site attacks the C1' of nucleotide 34 to detach the guanine base from the RNA, forming a covalent enzyme-RNA intermediate. The proton acceptor active site deprotonates the incoming PreQ1, allowing a nucleophilic attack on the C1' of the ribose to form the product. After dissociation, two additional enzymatic reactions on the tRNA convert PreQ1 to queuine (Q), resulting in the hypermodified nucleoside queuosine (7-(((4,5-cis-dihydroxy-2-cyclopenten-1-yl)amino)methyl)-7-deazaguanosine). In Chromobacterium violaceum (strain ATCC 12472 / DSM 30191 / JCM 1249 / CCUG 213 / NBRC 12614 / NCIMB 9131 / NCTC 9757 / MK), this protein is Queuine tRNA-ribosyltransferase.